Here is a 231-residue protein sequence, read N- to C-terminus: LexA repressor (231 aa).

Positions F26–T46 form a DNA-binding region, H-T-H motif. Active-site for autocatalytic cleavage activity residues include S152 and K190.

The protein belongs to the peptidase S24 family. Homodimer.

The catalysed reaction is Hydrolysis of Ala-|-Gly bond in repressor LexA.. Represses a number of genes involved in the response to DNA damage (SOS response), including recA and lexA. In the presence of single-stranded DNA, RecA interacts with LexA causing an autocatalytic cleavage which disrupts the DNA-binding part of LexA, leading to derepression of the SOS regulon and eventually DNA repair. The polypeptide is LexA repressor (Bradyrhizobium diazoefficiens (strain JCM 10833 / BCRC 13528 / IAM 13628 / NBRC 14792 / USDA 110)).